The following is a 1333-amino-acid chain: DNA-directed RNA polymerase subunit beta' (1333 aa).

Residues Cys60, Cys62, Cys75, and Cys78 each contribute to the Zn(2+) site. Mg(2+)-binding residues include Asp535, Asp537, and Asp539. 4 residues coordinate Zn(2+): Cys901, Cys983, Cys990, and Cys993.

The protein belongs to the RNA polymerase beta' chain family. The RNAP catalytic core consists of 2 alpha, 1 beta, 1 beta' and 1 omega subunit. When a sigma factor is associated with the core the holoenzyme is formed, which can initiate transcription. Requires Mg(2+) as cofactor. It depends on Zn(2+) as a cofactor.

It carries out the reaction RNA(n) + a ribonucleoside 5'-triphosphate = RNA(n+1) + diphosphate. In terms of biological role, DNA-dependent RNA polymerase catalyzes the transcription of DNA into RNA using the four ribonucleoside triphosphates as substrates. In Corynebacterium efficiens (strain DSM 44549 / YS-314 / AJ 12310 / JCM 11189 / NBRC 100395), this protein is DNA-directed RNA polymerase subunit beta'.